A 123-amino-acid chain; its full sequence is D-ribose pyranase (123 aa).

The active-site Proton donor is the His-20. Substrate is bound by residues Asp-28, His-90, and 112 to 114 (YAN).

The protein belongs to the RbsD / FucU family. RbsD subfamily. As to quaternary structure, homodecamer.

It is found in the cytoplasm. The enzyme catalyses beta-D-ribopyranose = beta-D-ribofuranose. It participates in carbohydrate metabolism; D-ribose degradation; D-ribose 5-phosphate from beta-D-ribopyranose: step 1/2. Catalyzes the interconversion of beta-pyran and beta-furan forms of D-ribose. This Corynebacterium glutamicum (strain R) protein is D-ribose pyranase.